Here is a 367-residue protein sequence, read N- to C-terminus: Histone RNA hairpin-binding protein (367 aa).

The segment covering 1–12 (MAQKTPTKGTRS) has biased composition (polar residues). 2 disordered regions span residues 1–24 (MAQK…SPIK) and 49–200 (EVTE…HWEE). Residues 57 to 73 (LASRLEEERRCKSESRR) show a composition bias toward basic and acidic residues. The span at 147–156 (SNASTINEGA) shows a compositional bias: polar residues. Residues 183 to 192 (SDSSSVASSP) are compositionally biased toward low complexity. The interval 206–275 (CTDEAVLKRR…KWKRSLYEYC (70 aa)) is RNA-binding. The tract at residues 342–367 (MDESTLKASTNTDPSAPTDFSKMSSH) is disordered. Over residues 347–356 (LKASTNTDPS) the composition is skewed to polar residues.

It belongs to the SLBP family. Ubiquitinated by the CBC(fem-1) (Cul2-ElonginB-ElonginC) E3 ubiquitin-protein ligase complex, leading to its degradation.

Its function is as follows. Involved in histone pre-mRNA 3' processing. Required for chromosome condensation, progression of cell death and morphogenesis. The polypeptide is Histone RNA hairpin-binding protein (cdl-1) (Caenorhabditis elegans).